A 392-amino-acid polypeptide reads, in one-letter code: Na(+)/H(+) antiporter NhaA (392 aa).

11 helical membrane-spanning segments follow: residues isoleucine 17–leucine 37, leucine 59–valine 79, isoleucine 95–phenylalanine 115, glycine 125–glycine 145, valine 154–phenylalanine 174, valine 179–tryptophan 199, phenylalanine 213–valine 233, valine 254–valine 274, valine 290–valine 310, isoleucine 328–leucine 348, and leucine 363–valine 383.

Belongs to the NhaA Na(+)/H(+) (TC 2.A.33) antiporter family.

It localises to the cell inner membrane. The enzyme catalyses Na(+)(in) + 2 H(+)(out) = Na(+)(out) + 2 H(+)(in). Functionally, na(+)/H(+) antiporter that extrudes sodium in exchange for external protons. The polypeptide is Na(+)/H(+) antiporter NhaA (Proteus mirabilis (strain HI4320)).